Reading from the N-terminus, the 143-residue chain is MAMAYKMATEGMNVKEECQRWFMEMKWKKVHRFVVYKIDERSRAVLVDKVGGPGEGYEELVAALPTDDCRYAVFDFDFVTVDNCQKSKIFFIAWSPTASRIRAKILYATSKQGLRRVLDGVHYEVQATDSSEMGYDVIRGRAQ.

The ADF-H domain occupies 11 to 143 (GMNVKEECQR…GYDVIRGRAQ (133 aa)).

This sequence belongs to the actin-binding proteins ADF family.

In terms of biological role, actin-depolymerizing protein. Severs actin filaments (F-actin) and binds to actin monomers. The sequence is that of Actin-depolymerizing factor 5 (ADF5) from Oryza sativa subsp. japonica (Rice).